We begin with the raw amino-acid sequence, 365 residues long: Class I histocompatibility antigen, Gogo-A*0401 alpha chain (365 aa).

The N-terminal stretch at 1–24 (MAVMAPRTLVLLLSGALALTQTWA) is a signal peptide. The segment at 25–114 (GSHSMRYFYT…LRGYYNQSED (90 aa)) is alpha-1. Over 25 to 308 (GSHSMRYFYT…EPSSQPTIPI (284 aa)) the chain is Extracellular. An N-linked (GlcNAc...) asparagine glycan is attached at asparagine 110. Residues 115–206 (GSHTIQRMYG…ENGKETLQLT (92 aa)) are alpha-2. Cystine bridges form between cysteine 125–cysteine 188 and cysteine 227–cysteine 283. The segment at 207–298 (DAPKTHMTHH…GLPKPLTLRW (92 aa)) is alpha-3. The 87-residue stretch at 209-295 (PKTHMTHHPV…QHEGLPKPLT (87 aa)) folds into the Ig-like C1-type domain. The segment at 299–308 (EPSSQPTIPI) is connecting peptide. A helical transmembrane segment spans residues 309-332 (VGIIAGLVLFGAVIAGAVVAAVRW). Residues 333–365 (RRKSSDRKGGSYSQAASSDSAQGSDVSLTACKV) are Cytoplasmic-facing. The segment at 338-365 (DRKGGSYSQAASSDSAQGSDVSLTACKV) is disordered. A compositionally biased stretch (low complexity) spans 342 to 359 (GSYSQAASSDSAQGSDVS). Serine 343 carries the phosphoserine modification. Tyrosine 344 bears the Phosphotyrosine mark. Residues serine 345, serine 349, serine 350, serine 352, serine 356, and serine 359 each carry the phosphoserine modification.

It belongs to the MHC class I family. Heterodimer of an alpha chain and a beta chain (beta-2-microglobulin).

It localises to the membrane. Functionally, involved in the presentation of foreign antigens to the immune system. The sequence is that of Class I histocompatibility antigen, Gogo-A*0401 alpha chain from Gorilla gorilla gorilla (Western lowland gorilla).